The primary structure comprises 158 residues: Cyclic pyranopterin monophosphate synthase (158 aa).

Substrate contacts are provided by residues 76–78 (MCH) and 114–115 (ME). Residue aspartate 129 is part of the active site.

Belongs to the MoaC family. Homohexamer; trimer of dimers.

The enzyme catalyses (8S)-3',8-cyclo-7,8-dihydroguanosine 5'-triphosphate = cyclic pyranopterin phosphate + diphosphate. Its pathway is cofactor biosynthesis; molybdopterin biosynthesis. Catalyzes the conversion of (8S)-3',8-cyclo-7,8-dihydroguanosine 5'-triphosphate to cyclic pyranopterin monophosphate (cPMP). The chain is Cyclic pyranopterin monophosphate synthase from Clostridium perfringens (strain 13 / Type A).